The chain runs to 454 residues: uncharacterized protein (454 aa).

The 45-residue stretch at 1-45 folds into the TRAM domain; the sequence is MAAEGKAIAKVNDLVIFVPYVVPGDVVDLQIKRKKNKYAEAEAVK. Residues C58, C64, C67, and C160 each contribute to the [4Fe-4S] cluster site. Residues Q286, Y315, E336, and D385 each coordinate S-adenosyl-L-methionine. C412 (nucleophile) is an active-site residue.

The protein belongs to the class I-like SAM-binding methyltransferase superfamily. RNA M5U methyltransferase family.

This is an uncharacterized protein from Bacteroides thetaiotaomicron (strain ATCC 29148 / DSM 2079 / JCM 5827 / CCUG 10774 / NCTC 10582 / VPI-5482 / E50).